The primary structure comprises 752 residues: Glutamate carboxypeptidase 2 (752 aa).

Over 1–22 (MWNALQDRDSAEVLGHRQRWLR) the chain is Cytoplasmic. The residue at position 10 (Ser-10) is a Phosphoserine. Residues 23-44 (VGTLVLALTGTFLIGFLFGWFI) form a helical; Signal-anchor for type II membrane protein membrane-spanning segment. Residues 45–752 (KPSNEATGNV…AAAETLREVA (708 aa)) are Extracellular-facing. 3 N-linked (GlcNAc...) asparagine glycosylation sites follow: Asn-78, Asn-123, and Asn-155. Arg-212 and Asn-259 together coordinate substrate. Residues Thr-271 and Tyr-274 each coordinate Ca(2+). An NAALADase region spans residues 276-589 (ANEHAYRHEL…QVRGAMVFEL (314 aa)). A glycan (N-linked (GlcNAc...) asparagine) is linked at Asn-338. The Zn(2+) site is built by His-379 and Asp-389. Glu-426 serves as a coordination point for substrate. Glu-426 functions as the Nucleophile; for NAALADase activity in the catalytic mechanism. A Zn(2+)-binding site is contributed by Glu-427. Residues Glu-435 and Glu-438 each coordinate Ca(2+). Asp-455 lines the Zn(2+) pocket. N-linked (GlcNAc...) asparagine glycosylation is found at Asn-461 and Asn-478. Residues 519 to 520 (SG), Asn-521, 536 to 538 (RAR), Tyr-554, and 554 to 555 (YH) each bind substrate. His-555 lines the Zn(2+) pocket. An N-linked (GlcNAc...) asparagine glycan is attached at Asn-615. Catalysis depends on Ser-630, which acts as the Charge relay system. An N-linked (GlcNAc...) asparagine glycan is attached at Asn-640. Residues Asp-668 and His-691 each act as charge relay system in the active site. 701–702 (KY) contributes to the substrate binding site. N-linked (GlcNAc...) asparagine glycosylation occurs at Asn-722.

The protein belongs to the peptidase M28 family. M28B subfamily. Homodimer. The cofactor is Zn(2+). Expressed predominantly in the hippocampal region of the brain and in kidney. Lower levels in the ovary, testis and mandibular gland.

The protein resides in the cell membrane. It catalyses the reaction Release of an unsubstituted, C-terminal glutamyl residue, typically from Ac-Asp-Glu or folylpoly-gamma-glutamates.. With respect to regulation, the NAALADase and folate hydrolase activities are inhibited by quisqualic acid. Functionally, has both folate hydrolase and N-acetylated-alpha-linked-acidic dipeptidase (NAALADase) activity. Has a preference for tri-alpha-glutamate peptides. In the intestine, required for the uptake of folate. In the brain, modulates excitatory neurotransmission through the hydrolysis of the neuropeptide, N-aceylaspartylglutamate (NAAG), thereby releasing glutamate. Also exhibits a dipeptidyl-peptidase IV type activity. In vitro, cleaves Gly-Pro-AMC. This Mus musculus (Mouse) protein is Glutamate carboxypeptidase 2 (Folh1).